A 358-amino-acid chain; its full sequence is Ethanol acetyltransferase 1 (358 aa).

The 108-residue stretch at 59 to 166 (PIVFIHGLFG…NAPINQPHIS (108 aa)) folds into the AB hydrolase-1 domain. Active-site charge relay system residues include Ser-132, Asp-156, and His-305.

It belongs to the AB hydrolase superfamily.

It localises to the mitochondrion. It catalyses the reaction ethanol + acetyl-CoA = ethyl acetate + CoA. The enzyme catalyses acetyl-CoA + H2O = acetate + CoA + H(+). It carries out the reaction ethyl acetate + H2O = ethanol + acetate + H(+). Alcohol acetyltransferase that catalyzes the synthesis of ethyl acetate from ethanol and acetyl-CoA. Can also function as a thioesterase by hydrolyzing acetyl-CoA in the absence of ethanol, as well as esterase hydrolyzing ethyl acetate. This Eremothecium cymbalariae (strain CBS 270.75 / DBVPG 7215 / KCTC 17166 / NRRL Y-17582) (Yeast) protein is Ethanol acetyltransferase 1 (EAT1).